The following is a 1002-amino-acid chain: Isoleucine--tRNA ligase, mitochondrial (1002 aa).

The 'HIGH' region signature appears at 94–104 (PYANGELHLGH). The short motif at 668–672 (KMSKS) is the 'KMSKS' region element. ATP is bound at residue Lys671.

The protein belongs to the class-I aminoacyl-tRNA synthetase family.

It is found in the mitochondrion matrix. The catalysed reaction is tRNA(Ile) + L-isoleucine + ATP = L-isoleucyl-tRNA(Ile) + AMP + diphosphate. The sequence is that of Isoleucine--tRNA ligase, mitochondrial (ISM1) from Saccharomyces cerevisiae (strain ATCC 204508 / S288c) (Baker's yeast).